The chain runs to 599 residues: Adenine deaminase (599 aa).

Belongs to the metallo-dependent hydrolases superfamily. Adenine deaminase family. Mn(2+) is required as a cofactor.

The catalysed reaction is adenine + H2O + H(+) = hypoxanthine + NH4(+). The sequence is that of Adenine deaminase from Clostridium botulinum (strain ATCC 19397 / Type A).